We begin with the raw amino-acid sequence, 363 residues long: MLKSCGRKLLLSLVGSMFTCLLVLMVEPPGRPGLARGEAGGAQRALQSLGAARAAGQGAPGLRSFADYFGRLSRARRELPAAPPSPPRPPAEDITPRDVFIAVKTTKKFHKARLELLLDTWISRNRDMTFIFTDGEDEELKKQARNVINTNCSAAHSRQALSCKMAVEYDKFIESGRKWFCHVDDDNYVNVRTLVKLLSSYPHTQDIYIGKPSLDRPIQATERISENKMHPVHFWFATGGAGFCISRGLALKMSPWASGGHFMSTAEKIRLPDDCTIGYIIESVLGVKLIRSNLFHSHLENLHQVPKTEIHKQVTLSYGMFENKRNSIHMKGAFSVEEDPSRFRSVHCLLYPDTPWCPSNVVY.

At 1-8 (MLKSCGRK) the chain is on the cytoplasmic side. The helical; Signal-anchor for type II membrane protein transmembrane segment at 9–29 (LLLSLVGSMFTCLLVLMVEPP) threads the bilayer. Residues 30–363 (GRPGLARGEA…TPWCPSNVVY (334 aa)) are Lumenal-facing. Residue arginine 113 participates in substrate binding. The N-linked (GlcNAc...) asparagine glycan is linked to asparagine 151. 2 cysteine pairs are disulfide-bonded: cysteine 152/cysteine 163 and cysteine 181/cysteine 244. Aspartate 185 is a substrate binding site. Mn(2+) is bound at residue aspartate 186. The active site involves aspartate 274. Residue histidine 298 coordinates Mn(2+). Cysteine 348 and cysteine 357 are oxidised to a cystine.

The protein belongs to the glycosyltransferase 31 family. The cofactor is Mn(2+). Co(2+) is required as a cofactor. Post-translationally, a soluble form may be derived from the membrane form by proteolytic processing.

Its subcellular location is the golgi apparatus membrane. It catalyses the reaction 3-O-(alpha-L-fucosyl)-L-threonyl-[EGF-like domain protein] + UDP-N-acetyl-alpha-D-glucosamine = 3-O-(N-acetyl-beta-D-glucosaminyl-(1-&gt;3)-alpha-L-fucosyl)-L-threonyl-[EGF-like domain protein] + UDP + H(+). The enzyme catalyses 3-O-(alpha-L-fucosyl)-L-seryl-[EGF-like domain protein] + UDP-N-acetyl-alpha-D-glucosamine = 3-O-(N-acetyl-beta-D-glucosaminyl-(1-&gt;3)-alpha-L-fucosyl)-L-seryl-[EGF-like domain protein] + UDP + H(+). Functionally, glycosyltransferase that initiates the elongation of O-linked fucose residues attached to EGF-like repeats in the extracellular domain of Notch molecules. Essential mediator of somite segmentation and patterning. This chain is Beta-1,3-N-acetylglucosaminyltransferase lunatic fringe (LFNG), found in Gallus gallus (Chicken).